A 427-amino-acid chain; its full sequence is UPF0229 protein YeaH (427 aa).

Residues 79-90 show a composition bias toward basic and acidic residues; the sequence is NDHFIQNDRIER. The interval 79–110 is disordered; the sequence is NDHFIQNDRIERPQGGGGGSGSGQGQASQDGE. A compositionally biased stretch (gly residues) spans 92 to 102; sequence QGGGGGSGSGQ.

The protein belongs to the UPF0229 family.

This chain is UPF0229 protein YeaH, found in Salmonella paratyphi B (strain ATCC BAA-1250 / SPB7).